Reading from the N-terminus, the 271-residue chain is Putative phosphoenolpyruvate synthase regulatory protein (271 aa).

Position 152 to 159 (152 to 159 (GVSRSGKT)) interacts with ADP.

Belongs to the pyruvate, phosphate/water dikinase regulatory protein family. PSRP subfamily.

It carries out the reaction [pyruvate, water dikinase] + ADP = [pyruvate, water dikinase]-phosphate + AMP + H(+). The enzyme catalyses [pyruvate, water dikinase]-phosphate + phosphate + H(+) = [pyruvate, water dikinase] + diphosphate. Its function is as follows. Bifunctional serine/threonine kinase and phosphorylase involved in the regulation of the phosphoenolpyruvate synthase (PEPS) by catalyzing its phosphorylation/dephosphorylation. The polypeptide is Putative phosphoenolpyruvate synthase regulatory protein (Dichelobacter nodosus (strain VCS1703A)).